The sequence spans 191 residues: Probable ribosome biogenesis protein RLP24 (191 aa).

Position 136 is a phosphoserine (S136).

It belongs to the eukaryotic ribosomal protein eL24 family. Associated with nucleolar and cytoplasmic pre-60S particles. At the end of biogenesis it dissociates from cytoplasmic pre-60S particles and is likely to be exchanged for its ribosomal homologue, RPL24.

It is found in the nucleus. The protein resides in the nucleolus. Functionally, involved in the biogenesis of the 60S ribosomal subunit. Ensures the docking of NOG1 to pre-60S particles. The polypeptide is Probable ribosome biogenesis protein RLP24 (RpL24-like) (Drosophila melanogaster (Fruit fly)).